A 379-amino-acid chain; its full sequence is Cytochrome b (379 aa).

Helical transmembrane passes span 33–53 (FGSL…FLAM), 77–98 (WLIR…FIHV), 113–133 (WNIG…GYVL), and 178–198 (FFAF…VHLL). 2 residues coordinate heme b: histidine 83 and histidine 97. Positions 182 and 196 each coordinate heme b. Histidine 201 is a binding site for a ubiquinone. 4 helical membrane-spanning segments follow: residues 226-246 (IKDL…ALFF), 288-308 (LGGV…PLLN), 320-340 (ITQT…WIGG), and 347-367 (FTTI…ILMP).

This sequence belongs to the cytochrome b family. The cytochrome bc1 complex contains 11 subunits: 3 respiratory subunits (MT-CYB, CYC1 and UQCRFS1), 2 core proteins (UQCRC1 and UQCRC2) and 6 low-molecular weight proteins (UQCRH/QCR6, UQCRB/QCR7, UQCRQ/QCR8, UQCR10/QCR9, UQCR11/QCR10 and a cleavage product of UQCRFS1). This cytochrome bc1 complex then forms a dimer. The cofactor is heme b.

It is found in the mitochondrion inner membrane. Its function is as follows. Component of the ubiquinol-cytochrome c reductase complex (complex III or cytochrome b-c1 complex) that is part of the mitochondrial respiratory chain. The b-c1 complex mediates electron transfer from ubiquinol to cytochrome c. Contributes to the generation of a proton gradient across the mitochondrial membrane that is then used for ATP synthesis. The polypeptide is Cytochrome b (MT-CYB) (Akodon affinis (Colombian grass mouse)).